The sequence spans 319 residues: NAP1-binding protein (319 aa).

A compositionally biased stretch (basic residues) spans 34–43 (SALRSRRKQM). Residues 34–74 (SALRSRRKQMRPTGKSVLKRPRKVTDRKTEEKIRTNRRKTP) are disordered. Residues 56 to 67 (KVTDRKTEEKIR) are compositionally biased toward basic and acidic residues. Ser251 and Ser260 each carry phosphoserine. Positions 278-319 (EMQPLQENISPACPTPPYRSRETEKEDETLSPISVDFSSYLS) are disordered.

As to quaternary structure, interacts with NDC1 and MPS2.

This chain is NAP1-binding protein (NBP1), found in Saccharomyces cerevisiae (strain ATCC 204508 / S288c) (Baker's yeast).